The sequence spans 265 residues: NADH-ubiquinone oxidoreductase chain 5 (265 aa).

Helical transmembrane passes span 10–30, 50–70, 92–112, 113–133, 153–173, 183–203, 215–235, and 244–264; these read ISFY…LKFL, IVMT…VLLI, ILLV…PNLI, SILL…IYFQ, VALL…YIFY, MMII…QIPF, TPVS…YLLI, and WWMA…AGLG.

This sequence belongs to the complex I subunit 5 family.

The protein resides in the mitochondrion inner membrane. The enzyme catalyses a ubiquinone + NADH + 5 H(+)(in) = a ubiquinol + NAD(+) + 4 H(+)(out). In terms of biological role, core subunit of the mitochondrial membrane respiratory chain NADH dehydrogenase (Complex I) that is believed to belong to the minimal assembly required for catalysis. Complex I functions in the transfer of electrons from NADH to the respiratory chain. The immediate electron acceptor for the enzyme is believed to be ubiquinone. This is NADH-ubiquinone oxidoreductase chain 5 (ND5) from Anopheles quadriannulatus (Mosquito).